Here is a 381-residue protein sequence, read N- to C-terminus: Protein palisade (381 aa).

The first 25 residues, Met-1–Ala-25, serve as a signal peptide directing secretion. Tandem repeats lie at residues Pro-190 to Ala-199, Pro-200 to Ala-209, Pro-210 to Ala-219, Pro-220 to Ala-229, Pro-230 to Thr-239, and Pro-247 to Ala-256. Residues Pro-190–Ala-256 form a 6 X 10 AA approximate tandem repeats of P-[AP]-A-P-A-Y-E-[AP]-P-[AT] region. Disordered regions lie at residues Glu-236–Ser-270 and Thr-309–Asn-329. The span at Thr-311–Pro-321 shows a compositional bias: pro residues.

Sulfated by pip; may be involved in embryo dorsal-ventral axis determination. Sulfation by pip may occur on covalently bound glycosaminoglycans. Post-translationally, may undergo both disulfide and non-disulfide cross-linking upon incorporation into the vitelline membrane. As to expression, present in the perivitelline space of stage 10 egg chambers and in the vitelline membrane adjacent to the oocyte in stage 13 and 14 egg chambers (at protein level).

The protein localises to the secreted. It is found in the extracellular space. It localises to the extracellular matrix. Functionally, minor protein component of the vitelline membrane. Involved in vitelline membrane biogenesis during late stages of oogenesis. Required for efficient disulfide and non-disulfide cross-linking of several vitelline membrane components. The sequence is that of Protein palisade from Drosophila melanogaster (Fruit fly).